The primary structure comprises 716 residues: Polycystin-2 (716 aa).

Composition is skewed to basic and acidic residues over residues 1–10 and 30–41; these read MNYGAADERW and MVSEEYEHDKKK. The segment at 1-44 is disordered; it reads MNYGAADERWANPPQPVAAAEHGPSFDHSMVSEEYEHDKKKNPA. The Cytoplasmic segment spans residues 1 to 72; sequence MNYGAADERW…SDGKIKLTAR (72 aa). A helical membrane pass occupies residues 73–93; that stretch reads SFMEVGGYAVFLIVLVYVAFA. At 94 to 324 the chain is on the extracellular side; the sequence is QNSIQSYYYS…YQTSGGTRMM (231 aa). N-linked (GlcNAc...) asparagine glycosylation is found at Asn-150 and Asn-177. Residues Cys-180 and Cys-193 are joined by a disulfide bond. A helical transmembrane segment spans residues 325–345; sequence IFEGIFCGFILYFIFEELFAI. Residues 346–355 lie on the Cytoplasmic side of the membrane; the sequence is GRHRLHYLTQ. Residues 356–376 traverse the membrane as a helical segment; it reads FWNLVDVVLLGFSVATIILSV. Asn-377 is a glycosylation site (N-linked (GlcNAc...) asparagine). Residues 377–409 lie on the Extracellular side of the membrane; the sequence is NRTKTGVNRVNSVIENGLTNAPFDDVTSSENSY. The chain crosses the membrane as a helical span at residues 410 to 430; that stretch reads LNIKACVVFVAWVKVFKFISV. The Cytoplasmic portion of the chain corresponds to 431–447; the sequence is NKTMSQLSSTLTRSAKD. The helical transmembrane segment at 448-468 threads the bilayer; the sequence is IGGFAVMFAVFFFAFAQFGYL. The Extracellular portion of the chain corresponds to 469–482; sequence CFGTQIADYSNLYN. Positions 483 to 497 form an intramembrane region, pore-forming; it reads SAFALLRLILGDFNF. Over 498–510 the chain is Extracellular; that stretch reads SALESCNRFFGPA. A helical membrane pass occupies residues 511–531; it reads FFIAYVFFVSFILLNMFLAII. Topologically, residues 532–716 are cytoplasmic; it reads NDSYVEVKAE…ITSIADKKEE (185 aa). Ser-534 carries the phosphoserine; by CK2 modification. Residues 613-680 are a coiled coil; that stretch reads EKVAEDIADE…IEKQRVQQQD (68 aa). Residues 696–716 form a disordered region; it reads RNRESAARRPTITSIADKKEE.

Belongs to the polycystin family. Phosphorylated. CK2 (kin-3 and kin-10) and calcineurin act antagonistically to regulate the phosphorylation state. In terms of tissue distribution, exclusively expressed in a subset of 3 categories of adult male sensory neurons: ray neurons, hook neurons and head cephalic (CEM) neurons. Expressed in the male tail.

It is found in the cell membrane. The protein localises to the cell projection. Its subcellular location is the cilium membrane. It localises to the cilium. The protein resides in the axon. It is found in the dendrite. The protein localises to the perikaryon. Its subcellular location is the endoplasmic reticulum membrane. Its function is as follows. Functions as a calcium permeable cation channel. Required for 2 aspects of male mating behavior: response to hermaphrodite contact and vulva location. Acts in the same pathway as lov-1 and atp-2 in response behavior. In Caenorhabditis elegans, this protein is Polycystin-2.